Here is a 307-residue protein sequence, read N- to C-terminus: Protein FAM76A (307 aa).

Disordered stretches follow at residues 142 to 195 (QRKH…ESIT) and 287 to 307 (KQAA…ITSP). Residues 161-182 (SRLSGGSHYNSQKTLSTSSIQN) show a composition bias toward polar residues. Residues 217–299 (IIAQLKEEVA…AALSKSKKSE (83 aa)) adopt a coiled-coil conformation.

This sequence belongs to the FAM76 family.

In Bos taurus (Bovine), this protein is Protein FAM76A (FAM76A).